A 248-amino-acid polypeptide reads, in one-letter code: Adenosylcobinamide-GDP ribazoletransferase (248 aa).

Transmembrane regions (helical) follow at residues 36–56 (FFLP…YLGL), 59–79 (FLPA…VTGG), 114–134 (GTIA…SLVL), 137–157 (YSIA…FLCL), 170–190 (IFIG…ILAL), and 199–219 (ATII…LLCL).

The protein belongs to the CobS family. It depends on Mg(2+) as a cofactor.

The protein resides in the cell membrane. It catalyses the reaction alpha-ribazole + adenosylcob(III)inamide-GDP = adenosylcob(III)alamin + GMP + H(+). It carries out the reaction alpha-ribazole 5'-phosphate + adenosylcob(III)inamide-GDP = adenosylcob(III)alamin 5'-phosphate + GMP + H(+). The protein operates within cofactor biosynthesis; adenosylcobalamin biosynthesis; adenosylcobalamin from cob(II)yrinate a,c-diamide: step 7/7. Functionally, joins adenosylcobinamide-GDP and alpha-ribazole to generate adenosylcobalamin (Ado-cobalamin). Also synthesizes adenosylcobalamin 5'-phosphate from adenosylcobinamide-GDP and alpha-ribazole 5'-phosphate. This Clostridium botulinum (strain Kyoto / Type A2) protein is Adenosylcobinamide-GDP ribazoletransferase.